The sequence spans 169 residues: Putative phosphoesterase SAR0985 (169 aa).

Catalysis depends on H34, which acts as the Proton donor. 2 consecutive short sequence motifs (HXTX) follow at residues 34–37 (HVTI) and 115–118 (HFTI). H115 acts as the Proton acceptor in catalysis.

It belongs to the 2H phosphoesterase superfamily. YjcG family.

This chain is Putative phosphoesterase SAR0985, found in Staphylococcus aureus (strain MRSA252).